The chain runs to 207 residues: Large ribosomal subunit protein uL4 (207 aa).

Residues 45–80 (RQGTHAVKNRSEVRGGGRKPWRQKGTGRARQGSTRS) form a disordered region. The segment covering 60–71 (GGRKPWRQKGTG) has biased composition (basic residues).

The protein belongs to the universal ribosomal protein uL4 family. As to quaternary structure, part of the 50S ribosomal subunit.

One of the primary rRNA binding proteins, this protein initially binds near the 5'-end of the 23S rRNA. It is important during the early stages of 50S assembly. It makes multiple contacts with different domains of the 23S rRNA in the assembled 50S subunit and ribosome. Functionally, forms part of the polypeptide exit tunnel. The protein is Large ribosomal subunit protein uL4 of Oceanobacillus iheyensis (strain DSM 14371 / CIP 107618 / JCM 11309 / KCTC 3954 / HTE831).